A 272-amino-acid chain; its full sequence is Formamidopyrimidine-DNA glycosylase (272 aa).

The Schiff-base intermediate with DNA role is filled by P2. E3 (proton donor) is an active-site residue. The Proton donor; for beta-elimination activity role is filled by K58. The DNA site is built by H92, R111, and R153. The FPG-type zinc-finger motif lies at 238 to 272; sequence NVYGRGGEPCPVCAKPLTEKPLSQRTTVYCTHCQN. The Proton donor; for delta-elimination activity role is filled by R262.

This sequence belongs to the FPG family. Monomer. Requires Zn(2+) as cofactor.

The catalysed reaction is Hydrolysis of DNA containing ring-opened 7-methylguanine residues, releasing 2,6-diamino-4-hydroxy-5-(N-methyl)formamidopyrimidine.. It carries out the reaction 2'-deoxyribonucleotide-(2'-deoxyribose 5'-phosphate)-2'-deoxyribonucleotide-DNA = a 3'-end 2'-deoxyribonucleotide-(2,3-dehydro-2,3-deoxyribose 5'-phosphate)-DNA + a 5'-end 5'-phospho-2'-deoxyribonucleoside-DNA + H(+). Involved in base excision repair of DNA damaged by oxidation or by mutagenic agents. Acts as a DNA glycosylase that recognizes and removes damaged bases. Has a preference for oxidized purines, such as 7,8-dihydro-8-oxoguanine (8-oxoG). Has AP (apurinic/apyrimidinic) lyase activity and introduces nicks in the DNA strand. Cleaves the DNA backbone by beta-delta elimination to generate a single-strand break at the site of the removed base with both 3'- and 5'-phosphates. This is Formamidopyrimidine-DNA glycosylase from Teredinibacter turnerae (strain ATCC 39867 / T7901).